Consider the following 828-residue polypeptide: Periplasmic nitrate reductase (828 aa).

The segment at residues 1–33 (MKLSRRDFMKANAAVAAAAAAGLTIPTVVQAAA) is a signal peptide (tat-type signal). The region spanning 39 to 95 (IKWDKAPCRFCGTGCGVLVGTQNGRIVASQGDPEAAVNRGLSCIKGYFLPKIMYGKD) is the 4Fe-4S Mo/W bis-MGD-type domain. 4 residues coordinate [4Fe-4S] cluster: Cys46, Cys49, Cys53, and Cys81. Mo-bis(molybdopterin guanine dinucleotide) contacts are provided by residues Lys83, Gln150, Asn175, Cys179, 212 to 219 (WGSNMAEM), 243 to 247 (STFEH), 262 to 264 (QTD), Met372, Gln376, Asn482, 508 to 509 (SD), Lys531, Asp558, and 718 to 727 (TGRVLEHWHT). Phe794 lines the substrate pocket. Mo-bis(molybdopterin guanine dinucleotide) is bound by residues Asn802 and Lys819.

It belongs to the prokaryotic molybdopterin-containing oxidoreductase family. NasA/NapA/NarB subfamily. In terms of assembly, component of the periplasmic nitrate reductase NapAB complex composed of NapA and NapB. Requires [4Fe-4S] cluster as cofactor. Mo-bis(molybdopterin guanine dinucleotide) serves as cofactor. In terms of processing, predicted to be exported by the Tat system. The position of the signal peptide cleavage has not been experimentally proven.

The protein resides in the periplasm. It carries out the reaction 2 Fe(II)-[cytochrome] + nitrate + 2 H(+) = 2 Fe(III)-[cytochrome] + nitrite + H2O. Its function is as follows. Catalytic subunit of the periplasmic nitrate reductase complex NapAB. Receives electrons from NapB and catalyzes the reduction of nitrate to nitrite. This Serratia proteamaculans (strain 568) protein is Periplasmic nitrate reductase.